A 345-amino-acid polypeptide reads, in one-letter code: Dihydroorotate dehydrogenase (quinone) (345 aa).

Residues 65–69 and T89 contribute to the FMN site; that span reads AGLDK. K69 is a binding site for substrate. Position 114 to 118 (114 to 118) interacts with substrate; the sequence is NRMGF. The FMN site is built by N142 and N175. N175 contributes to the substrate binding site. S178 functions as the Nucleophile in the catalytic mechanism. N180 serves as a coordination point for substrate. Residues K220 and T248 each contribute to the FMN site. Residue 249-250 coordinates substrate; it reads NT. Residues G271, G300, and 321–322 contribute to the FMN site; that span reads YT.

The protein belongs to the dihydroorotate dehydrogenase family. Type 2 subfamily. In terms of assembly, monomer. The cofactor is FMN.

The protein resides in the cell membrane. It carries out the reaction (S)-dihydroorotate + a quinone = orotate + a quinol. It participates in pyrimidine metabolism; UMP biosynthesis via de novo pathway; orotate from (S)-dihydroorotate (quinone route): step 1/1. Its function is as follows. Catalyzes the conversion of dihydroorotate to orotate with quinone as electron acceptor. This chain is Dihydroorotate dehydrogenase (quinone), found in Burkholderia thailandensis (strain ATCC 700388 / DSM 13276 / CCUG 48851 / CIP 106301 / E264).